Reading from the N-terminus, the 129-residue chain is Protein Turandot C (129 aa).

A signal peptide spans 1-21 (MNASISLLCLALLLISPFCLG).

It belongs to the Turandot family.

It is found in the secreted. Functionally, a humoral factor that may play a role in stress tolerance. This Drosophila melanogaster (Fruit fly) protein is Protein Turandot C.